Here is a 257-residue protein sequence, read N- to C-terminus: 3-deoxy-manno-octulosonate cytidylyltransferase (257 aa).

The protein belongs to the KdsB family.

Its subcellular location is the cytoplasm. It catalyses the reaction 3-deoxy-alpha-D-manno-oct-2-ulosonate + CTP = CMP-3-deoxy-beta-D-manno-octulosonate + diphosphate. The protein operates within nucleotide-sugar biosynthesis; CMP-3-deoxy-D-manno-octulosonate biosynthesis; CMP-3-deoxy-D-manno-octulosonate from 3-deoxy-D-manno-octulosonate and CTP: step 1/1. It participates in bacterial outer membrane biogenesis; lipopolysaccharide biosynthesis. Activates KDO (a required 8-carbon sugar) for incorporation into bacterial lipopolysaccharide in Gram-negative bacteria. The chain is 3-deoxy-manno-octulosonate cytidylyltransferase from Xylella fastidiosa (strain M12).